The chain runs to 271 residues: MTDLKTIIEEAYQNKDSFTTDTVPKKIHQAIHQTIELLDNGELRIAEKQNGQWNTNEWAKMAILLYFKTEPLKTFDAGYTFFYDKIPLKYTNNTSQPQSGVRVVPHAIVRKGAYLAPNTVLMPSYINIGAYVDSGTLIDTWATVGSCAQIGKNVHLSGGAGIGGVLEPLQAHPTIIEDDCFIGARSEIVEGVMVEKGSVISMGVFVGQSTPIYNRQTQEITYGRIPAGSVVIPGSLPSKDGHYNRYSAIIVKQVDEKTRSKVSLNELLREG.

Substrate contacts are provided by R102 and D139.

Belongs to the transferase hexapeptide repeat family. As to quaternary structure, homotrimer.

The protein localises to the cytoplasm. The catalysed reaction is (S)-2,3,4,5-tetrahydrodipicolinate + succinyl-CoA + H2O = (S)-2-succinylamino-6-oxoheptanedioate + CoA. The protein operates within amino-acid biosynthesis; L-lysine biosynthesis via DAP pathway; LL-2,6-diaminopimelate from (S)-tetrahydrodipicolinate (succinylase route): step 1/3. The sequence is that of 2,3,4,5-tetrahydropyridine-2,6-dicarboxylate N-succinyltransferase from Coxiella burnetii (strain Dugway 5J108-111).